Here is a 110-residue protein sequence, read N- to C-terminus: NADH dehydrogenase [ubiquinone] iron-sulfur protein 6, mitochondrial (110 aa).

Residues 1–22 (MASNLLKALIRSQILPSSRRNF) constitute a mitochondrion transit peptide.

This sequence belongs to the complex I NDUFS6 subunit family. In terms of assembly, complex I is composed of at least 49 different subunits. This is a component of the iron-sulfur (IP) fragment of the enzyme.

Its subcellular location is the mitochondrion inner membrane. Accessory subunit of the mitochondrial membrane respiratory chain NADH dehydrogenase (Complex I), that is believed not to be involved in catalysis. Complex I functions in the transfer of electrons from NADH to the respiratory chain. The immediate electron acceptor for the enzyme is believed to be ubiquinone. The sequence is that of NADH dehydrogenase [ubiquinone] iron-sulfur protein 6, mitochondrial from Arabidopsis thaliana (Mouse-ear cress).